We begin with the raw amino-acid sequence, 319 residues long: tRNA dimethylallyltransferase (319 aa).

An ATP-binding site is contributed by Gly-16 to Ser-23. Thr-18–Ser-23 is a binding site for substrate. The segment at Asp-46–Val-49 is interaction with substrate tRNA.

The protein belongs to the IPP transferase family. Monomer. Requires Mg(2+) as cofactor.

The catalysed reaction is adenosine(37) in tRNA + dimethylallyl diphosphate = N(6)-dimethylallyladenosine(37) in tRNA + diphosphate. Catalyzes the transfer of a dimethylallyl group onto the adenine at position 37 in tRNAs that read codons beginning with uridine, leading to the formation of N6-(dimethylallyl)adenosine (i(6)A). This chain is tRNA dimethylallyltransferase, found in Cutibacterium acnes (strain DSM 16379 / KPA171202) (Propionibacterium acnes).